Consider the following 396-residue polypeptide: MSGYPGQGYQGQGYGQGYGQGYPPQGGYYPPQPGYGGYPPQPPPPQHYQYGPPQGGYQYPPQDGSRAGPSDQAHQPPQGMQQFGHGAPSDYAFQYSQCTGKRKALLIGINYFGQEGELRGCINDVRNLSNFLMEFYQYRREDMVLLTDDAQDPMSQPTRDNIVRAMHWLVEGAQPNDSLFFHYSGHGGQTEDLDGDEDDGYDEVIYPVDFRANGHIVDDDMHLWMVQPLQAGVRLTAIFDSCHSGTALDLPYVYSTSGVLKEPNLAKEAGVGLLGAVQSYARGDLGGVATSLFGFAKKAFSDKQARDRTMRTKTSPADVISWSGSKDDQTSADATIASQATGAMSYAFVSALRANRNQTYNQLLNSIRDILEGQYSQKPQLSCSHPLDTENVWFVM.

The segment covering Met-1–Gln-20 has biased composition (gly residues). The interval Met-1–Gly-86 is disordered. Positions His-47 to Gln-62 are enriched in low complexity. Positions Gln-72–Gln-81 are enriched in polar residues. Catalysis depends on residues His-186 and Cys-242.

The protein belongs to the peptidase C14B family.

Its function is as follows. Involved in cell death (apoptosis). The sequence is that of Metacaspase-1 (MCA1) from Pyricularia oryzae (strain 70-15 / ATCC MYA-4617 / FGSC 8958) (Rice blast fungus).